Reading from the N-terminus, the 578-residue chain is Isocitrate dehydrogenase kinase/phosphatase (578 aa).

Residues 315-321 (APGIRGM) and K336 contribute to the ATP site. The active site involves D371.

It belongs to the AceK family.

The protein resides in the cytoplasm. It catalyses the reaction L-seryl-[isocitrate dehydrogenase] + ATP = O-phospho-L-seryl-[isocitrate dehydrogenase] + ADP + H(+). Its function is as follows. Bifunctional enzyme which can phosphorylate or dephosphorylate isocitrate dehydrogenase (IDH) on a specific serine residue. This is a regulatory mechanism which enables bacteria to bypass the Krebs cycle via the glyoxylate shunt in response to the source of carbon. When bacteria are grown on glucose, IDH is fully active and unphosphorylated, but when grown on acetate or ethanol, the activity of IDH declines drastically concomitant with its phosphorylation. The chain is Isocitrate dehydrogenase kinase/phosphatase from Escherichia coli (strain ATCC 8739 / DSM 1576 / NBRC 3972 / NCIMB 8545 / WDCM 00012 / Crooks).